Reading from the N-terminus, the 284-residue chain is Homeobox protein Hox-D13 (284 aa).

The segment at residues 217–276 is a DNA-binding region (homeobox); the sequence is GRKKRVPYTKTQLKELEREYATNKFITKEKRRRISTATNLTERQVTIWFQNRRVKEKKVV.

Belongs to the Abd-B homeobox family.

It localises to the nucleus. Its function is as follows. Sequence-specific transcription factor that binds gene promoters and activates their transcription. Part of a developmental regulatory system that provides cells with specific positional identities on the anterior-posterior axis. The protein is Homeobox protein Hox-D13 (HOXD13) of Heterodontus francisci (Horn shark).